Consider the following 128-residue polypeptide: Large ribosomal subunit protein eL8 (128 aa).

The protein belongs to the eukaryotic ribosomal protein eL8 family. As to quaternary structure, part of the 50S ribosomal subunit. Probably part of the RNase P complex.

The protein resides in the cytoplasm. In terms of biological role, multifunctional RNA-binding protein that recognizes the K-turn motif in ribosomal RNA, the RNA component of RNase P, box H/ACA, box C/D and box C'/D' sRNAs. This Ignicoccus hospitalis (strain KIN4/I / DSM 18386 / JCM 14125) protein is Large ribosomal subunit protein eL8.